A 129-amino-acid chain; its full sequence is Small ribosomal subunit protein uS9 (129 aa).

The segment at 110–129 is disordered; that stretch reads VERKKYGKKKARKSFQFSKR. Residues 114–129 show a composition bias toward basic residues; the sequence is KYGKKKARKSFQFSKR.

This sequence belongs to the universal ribosomal protein uS9 family.

The polypeptide is Small ribosomal subunit protein uS9 (Chlorobaculum parvum (strain DSM 263 / NCIMB 8327) (Chlorobium vibrioforme subsp. thiosulfatophilum)).